The following is a 208-amino-acid chain: Large ribosomal subunit protein uL4 (208 aa).

A compositionally biased stretch (basic and acidic residues) spans 47–58 (ARAARERSDVAR). The tract at residues 47-84 (ARAARERSDVARTGKKFGRQKGGGTARHGDRRAPIFIG) is disordered.

It belongs to the universal ribosomal protein uL4 family. In terms of assembly, part of the 50S ribosomal subunit.

One of the primary rRNA binding proteins, this protein initially binds near the 5'-end of the 23S rRNA. It is important during the early stages of 50S assembly. It makes multiple contacts with different domains of the 23S rRNA in the assembled 50S subunit and ribosome. In terms of biological role, forms part of the polypeptide exit tunnel. This is Large ribosomal subunit protein uL4 from Sphingopyxis alaskensis (strain DSM 13593 / LMG 18877 / RB2256) (Sphingomonas alaskensis).